The sequence spans 334 residues: snRNA-activating protein complex subunit 2 (334 aa).

Disordered stretches follow at residues 137-200 and 271-306; these read LHSK…STEE and AGGS…ELKS. Over residues 167 to 180 the composition is skewed to low complexity; that stretch reads IPSSAPAAPSSAPR.

In terms of assembly, part of the SNAPc complex composed of 5 subunits: SNAPC1, SNAPC2, SNAPC3, SNAPC4 and SNAPC5. SNAPC2 interacts with TBP and SNAPC4.

The protein resides in the nucleus. Part of the SNAPc complex required for the transcription of both RNA polymerase II and III small-nuclear RNA genes. Binds to the proximal sequence element (PSE), a non-TATA-box basal promoter element common to these 2 types of genes. Recruits TBP and BRF2 to the U6 snRNA TATA box. The protein is snRNA-activating protein complex subunit 2 (SNAPC2) of Homo sapiens (Human).